Reading from the N-terminus, the 453-residue chain is Alpha-2B adrenergic receptor (453 aa).

The Extracellular portion of the chain corresponds to 1–17 (MSGPAMVHQEPYSVQAT). A helical membrane pass occupies residues 18–42 (AAIASAITFLILFTIFGNALVILAV). Over 43–54 (LTSRSLRAPQNL) the chain is Cytoplasmic. The helical transmembrane segment at 55–80 (FLVSLAAADILVATLIIPFSLANELL) threads the bilayer. Over 81–90 (GYWYFWRAWC) the chain is Extracellular. A disulfide bond links cysteine 90 and cysteine 169. A helical membrane pass occupies residues 91–113 (EVYLALDVLFCTSSIVHLCAISL). The Cytoplasmic segment spans residues 114–135 (DRYWAVSRALEYNSKRTPRRIK). Residues 136–158 (CIILTVWLIAAVISLPPLIYKGD) form a helical membrane-spanning segment. Over 159–174 (QRPEPHGLPQCELNQE) the chain is Extracellular. The chain crosses the membrane as a helical span at residues 175–198 (AWYILASSIGSFFAPCLIMILVYL). The Cytoplasmic segment spans residues 199-375 (RIYVIAKRSH…LSREKRFTFV (177 aa)). The segment at 214 to 329 (AKRGSGEGES…ASPASVFNPP (116 aa)) is disordered. Residues 303-314 (AEEDEEEVEECE) are compositionally biased toward acidic residues. The helical transmembrane segment at 376–399 (LAVVIGVFVVCWFPFFFSYSLGAI) threads the bilayer. Residues 400 to 408 (CPQHCKVPH) are Extracellular-facing. The chain crosses the membrane as a helical span at residues 409 to 432 (GLFQFFFWIGYCNSSLNPVIYTIF). At 433 to 453 (NQDFRRAFRRILCRQWTQTGW) the chain is on the cytoplasmic side. Cysteine 445 is lipidated: S-palmitoyl cysteine.

The protein belongs to the G-protein coupled receptor 1 family. Adrenergic receptor subfamily. ADRA2B sub-subfamily. Interacts with RAB26. Interacts with PPP1R9B. Interacts with GGA1, GGA2 and GGA3.

Its subcellular location is the cell membrane. In terms of biological role, alpha-2 adrenergic receptors mediate the catecholamine-induced inhibition of adenylate cyclase through the action of G proteins. The sequence is that of Alpha-2B adrenergic receptor (Adra2b) from Mus musculus (Mouse).